The following is a 126-amino-acid chain: uncharacterized protein (126 aa).

This is an uncharacterized protein from Escherichia coli (strain K12).